Here is a 1672-residue protein sequence, read N- to C-terminus: Probable outer membrane protein PmpB (1672 aa).

Residues 1–14 form the signal peptide; the sequence is MSSMKWLSATAVFA. 4 disordered regions span residues 69 to 122, 203 to 263, 384 to 415, and 734 to 765; these read IPVK…GGAF, NTAE…GSGG, EAQT…AKGG, and STGV…PAPA. Low complexity-rich tracts occupy residues 77-88, 100-111, and 203-234; these read DDSSTSTPTTSS, SSSSSPNSGDTS, and NTAE…SKVQ. Polar residues-rich tracts occupy residues 235–256 and 384–399; these read SLFT…QTPS and EAQT…SQSG. Positions 734–744 are enriched in low complexity; sequence STGVATTATTS. The Autotransporter domain maps to 1379-1672; that stretch reads DDAAYNNFWV…MTSCGARMIF (294 aa).

It belongs to the PMP outer membrane protein family.

It localises to the secreted. Its subcellular location is the cell wall. It is found in the cell outer membrane. The polypeptide is Probable outer membrane protein PmpB (pmpB) (Chlamydia muridarum (strain MoPn / Nigg)).